Consider the following 693-residue polypeptide: Glycine--tRNA ligase beta subunit (693 aa).

It belongs to the class-II aminoacyl-tRNA synthetase family. In terms of assembly, tetramer of two alpha and two beta subunits.

The protein resides in the cytoplasm. The enzyme catalyses tRNA(Gly) + glycine + ATP = glycyl-tRNA(Gly) + AMP + diphosphate. In Vibrio vulnificus (strain YJ016), this protein is Glycine--tRNA ligase beta subunit.